The chain runs to 313 residues: MLDNVLRIATRQSPLALWQAHYVKDKLMASHPGLVVELVPMVTRGDVILDTPLAKVGGKGLFVKELEVALLENRADIAVHSMKDVPVEFPQGLGLVTICEREDPRDAFVSNNYDSLDALPAGSIVGTSSLRRQCQLAERRPDLIIRSLRGNVGTRLSKLDNGEYDAIILAVAGLKRLGLESRIRAALPPEISLPAVGQGAVGIECRLDDTRTRELLAALNHHETALRVTAERAMNTRLEGGCQVPIGSYAELIDGEIWLCALVGAPDGSQIIRGERRGAPQDAEQMGISLAEELLNNGAREILAEVYNGEAPA.

An S-(dipyrrolylmethanemethyl)cysteine modification is found at Cys-242.

It belongs to the HMBS family. Monomer. Requires dipyrromethane as cofactor.

The catalysed reaction is 4 porphobilinogen + H2O = hydroxymethylbilane + 4 NH4(+). It functions in the pathway porphyrin-containing compound metabolism; protoporphyrin-IX biosynthesis; coproporphyrinogen-III from 5-aminolevulinate: step 2/4. In terms of biological role, tetrapolymerization of the monopyrrole PBG into the hydroxymethylbilane pre-uroporphyrinogen in several discrete steps. This chain is Porphobilinogen deaminase, found in Shigella flexneri.